A 292-amino-acid polypeptide reads, in one-letter code: Putative OX-2 membrane glycoprotein homolog (292 aa).

Positions 1-18 (MSPLMLRLLPLLCIIISA) are cleaved as a signal peptide. One can recognise an Ig-like V-type domain in the interval 24-136 (PETSPSLVYE…TFTVDNEKTS (113 aa)). An intrachain disulfide couples C42 to C126. N-linked (GlcNAc...) asparagine; by host glycosylation is found at N45, N57, N72, and N195. Positions 147-237 (PIVVLYFRYL…TNQKASALVT (91 aa)) constitute an Ig-like C2-type domain. A helical membrane pass occupies residues 263–283 (VFTWIVPLILILIISVMVLLI).

It localises to the host membrane. This chain is Putative OX-2 membrane glycoprotein homolog (U85), found in Human herpesvirus 6B (strain Z29) (HHV-6 variant B).